The following is a 200-amino-acid chain: Small ribosomal subunit protein uS4 (200 aa).

Residues 92 to 155 enclose the S4 RNA-binding domain; the sequence is SRLDNLVYRM…RNLTVVKEAL (64 aa).

This sequence belongs to the universal ribosomal protein uS4 family. In terms of assembly, part of the 30S ribosomal subunit. Contacts protein S5. The interaction surface between S4 and S5 is involved in control of translational fidelity.

In terms of biological role, one of the primary rRNA binding proteins, it binds directly to 16S rRNA where it nucleates assembly of the body of the 30S subunit. With S5 and S12 plays an important role in translational accuracy. The polypeptide is Small ribosomal subunit protein uS4 (Shouchella clausii (strain KSM-K16) (Alkalihalobacillus clausii)).